We begin with the raw amino-acid sequence, 1963 residues long: Immunoglobulin A1 protease (1963 aa).

The first 36 residues, 1-36 (MEKYFGEKQERFSFRKLSVGLVSATISSLFFMSVLA), serve as a signal peptide directing secretion. Positions 37-99 (SSSVDAQETA…QNQLAELPNT (63 aa)) are excised as a propeptide. Positions 96–100 (LPNTG) match the LPXTG sorting signal motif. At threonine 99 the chain carries Pentaglycyl murein peptidoglycan amidated threonine. 2 helical membrane passes run 106–125 (QALVAGASLAALGILIFAVS) and 132–154 (KTVLHLVLVAGMGNGVLVSVHAL). The Extracellular segment spans residues 155-1963 (ENHLLLNYNT…FRSSIFENKK (1809 aa)). Residues 253–305 (KPFSTELINPRKEEKQSSDSQEQLAEHKNLETKKEEKISPKEKTGVNTLNPQD) form a disordered region. Positions 276-296 (LAEHKNLETKKEEKISPKEKT) are enriched in basic and acidic residues. In terms of domain architecture, G5 spans 314–393 (KPELLYREET…PRIVEKGTKK (80 aa)). The segment at 402-681 (ETGVEHKDVQ…GQTEPEKKLE (280 aa)) is disordered. 3 repeat units span residues 419 to 435 (AIQPELPEAVVSDKGEP), 436 to 452 (EVQPTLPEAVVTDKGET), and 453 to 469 (EVQPESPDTVVSDKGEP). A 3 X 17 AA approximate tandem repeats region spans residues 419–469 (AIQPELPEAVVSDKGEPEVQPTLPEAVVTDKGETEVQPESPDTVVSDKGEP). A compositionally biased stretch (basic and acidic residues) spans 485 to 511 (VKPETPVEKTKEQGPEKTEEVPVKPTE). Polar residues-rich tracts occupy residues 516-529 (NPNEGTTEGTSIQE) and 538-572 (EESTTNSEKVSPDTSSENTGEVSSNPSDSTTSVGE). The segment covering 574–591 (NKPEHNDSKNENSEKTVE) has biased composition (basic and acidic residues). 2 stretches are compositionally biased toward polar residues: residues 618–639 (EETQTNSGKIANENTGEVSNKP) and 648–674 (ESNQPEKNGTATKPENSGNTTSENGQT). Histidine 1604 provides a ligand contact to Zn(2+). Residue glutamate 1605 is part of the active site. Zn(2+)-binding residues include histidine 1608 and glutamate 1628.

The protein belongs to the peptidase M26 family. Zn(2+) serves as cofactor. Post-translationally, the Gram-positive cell-wall anchor motif LPXTG is located in the N-terminal part, in contrast to such motifs in other known streptococcal and staphylococcal proteins. The protease could be cleaved by the sortase and anchored in the membrane via the two potential N-terminal transmembrane domains, whereas the propeptide located prior to the LPXTG motif would remain attached to the cell wall peptidoglycan by an amide bond.

It localises to the secreted. It is found in the cell wall. The protein resides in the membrane. The catalysed reaction is Cleavage of Pro-|-Thr bond in the hinge region of the heavy chain of human IgA.. Zinc metalloproteinase which cleaves human immunoglobulin A1 (IgA1) in the hinge region. The chain is Immunoglobulin A1 protease (iga) from Streptococcus pneumoniae (strain ATCC BAA-255 / R6).